The sequence spans 438 residues: GTPase Obg (438 aa).

Positions 2–160 (NMFVDQIKIE…HYLELELKML (159 aa)) constitute an Obg domain. Residues 161–337 (ADVGLIGFPS…LMQLTADLLD (177 aa)) form the OBG-type G domain. Residues 167-174 (GFPSVGKS), 192-196 (FTTLT), 214-217 (DMPG), 284-287 (TKMD), and 318-320 (SAV) contribute to the GTP site. 2 residues coordinate Mg(2+): S174 and T194. The OCT domain maps to 360–438 (PDKKDEADFT…IEKFVFEFIQ (79 aa)).

This sequence belongs to the TRAFAC class OBG-HflX-like GTPase superfamily. OBG GTPase family. In terms of assembly, monomer. Requires Mg(2+) as cofactor.

The protein localises to the cytoplasm. Functionally, an essential GTPase which binds GTP, GDP and possibly (p)ppGpp with moderate affinity, with high nucleotide exchange rates and a fairly low GTP hydrolysis rate. Plays a role in control of the cell cycle, stress response, ribosome biogenesis and in those bacteria that undergo differentiation, in morphogenesis control. The sequence is that of GTPase Obg from Limosilactobacillus reuteri (strain DSM 20016) (Lactobacillus reuteri).